We begin with the raw amino-acid sequence, 218 residues long: Replication protein RepB (218 aa).

Positions 1–26 (MKSESKIDWTVPRPNKNPKTKQPYKR) are disordered. The segment covering 16–26 (KNPKTKQPYKR) has biased composition (basic residues).

The protein belongs to the Gram-positive plasmids replication protein type 2 family.

Its function is as follows. Is essential for plasmid replication. Nicks the positive strand at the plus origin of replication. The sequence is that of Replication protein RepB (repB) from Lactiplantibacillus plantarum (Lactobacillus plantarum).